A 295-amino-acid chain; its full sequence is Phosphatidylserine decarboxylase proenzyme (295 aa).

Catalysis depends on charge relay system; for autoendoproteolytic cleavage activity residues D113, H169, and S256. S256 serves as the catalytic Schiff-base intermediate with substrate; via pyruvic acid; for decarboxylase activity. Position 256 is a pyruvic acid (Ser); by autocatalysis (S256).

It belongs to the phosphatidylserine decarboxylase family. PSD-B subfamily. Prokaryotic type II sub-subfamily. Heterodimer of a large membrane-associated beta subunit and a small pyruvoyl-containing alpha subunit. Pyruvate is required as a cofactor. Post-translationally, is synthesized initially as an inactive proenzyme. Formation of the active enzyme involves a self-maturation process in which the active site pyruvoyl group is generated from an internal serine residue via an autocatalytic post-translational modification. Two non-identical subunits are generated from the proenzyme in this reaction, and the pyruvate is formed at the N-terminus of the alpha chain, which is derived from the carboxyl end of the proenzyme. The autoendoproteolytic cleavage occurs by a canonical serine protease mechanism, in which the side chain hydroxyl group of the serine supplies its oxygen atom to form the C-terminus of the beta chain, while the remainder of the serine residue undergoes an oxidative deamination to produce ammonia and the pyruvoyl prosthetic group on the alpha chain. During this reaction, the Ser that is part of the protease active site of the proenzyme becomes the pyruvoyl prosthetic group, which constitutes an essential element of the active site of the mature decarboxylase.

The protein localises to the cell membrane. The enzyme catalyses a 1,2-diacyl-sn-glycero-3-phospho-L-serine + H(+) = a 1,2-diacyl-sn-glycero-3-phosphoethanolamine + CO2. It functions in the pathway phospholipid metabolism; phosphatidylethanolamine biosynthesis; phosphatidylethanolamine from CDP-diacylglycerol: step 2/2. Functionally, catalyzes the formation of phosphatidylethanolamine (PtdEtn) from phosphatidylserine (PtdSer). In Clostridium novyi (strain NT), this protein is Phosphatidylserine decarboxylase proenzyme.